The chain runs to 457 residues: Adenylosuccinate synthetase isozyme 1 (457 aa).

The tract at residues Met1 to Glu25 is disordered. Residues Gly42–Lys48 and Gly70–Thr72 contribute to the GTP site. Asp43 acts as the Proton acceptor in catalysis. Mg(2+) contacts are provided by Asp43 and Gly70. Asp43 serves as a coordination point for substrate. IMP contacts are provided by residues Asp43 to Lys46, Asn68 to His71, Thr163, Arg177, Asn256, Thr271, and Arg335. His71 (proton donor) is an active-site residue. Substrate is bound at residue Val331 to Arg337. Residues Arg337, Lys363–Asp365, and Gly445–Lys448 each bind GTP.

This sequence belongs to the adenylosuccinate synthetase family. In terms of assembly, homodimer. The cofactor is Mg(2+).

It localises to the cytoplasm. It catalyses the reaction IMP + L-aspartate + GTP = N(6)-(1,2-dicarboxyethyl)-AMP + GDP + phosphate + 2 H(+). The protein operates within purine metabolism; AMP biosynthesis via de novo pathway; AMP from IMP: step 1/2. In terms of biological role, component of the purine nucleotide cycle (PNC), which interconverts IMP and AMP to regulate the nucleotide levels in various tissues, and which contributes to glycolysis and ammoniagenesis. Catalyzes the first committed step in the biosynthesis of AMP from IMP. This Bos taurus (Bovine) protein is Adenylosuccinate synthetase isozyme 1.